Consider the following 398-residue polypeptide: uncharacterized protein (398 aa).

2 consecutive transmembrane segments (helical) span residues 31–51 and 56–76; these read VVFS…CLLF and AFIT…FFGC.

Belongs to the chlamydial CPn_0129/CT_036/TC_0306 family.

It localises to the cell membrane. This is an uncharacterized protein from Chlamydia muridarum (strain MoPn / Nigg).